A 193-amino-acid polypeptide reads, in one-letter code: Ion-translocating oxidoreductase complex subunit A (193 aa).

Transmembrane regions (helical) follow at residues 5–25, 39–59, 65–85, 102–122, 134–154, and 171–191; these read ILLIISTALINNFVLVKFLGL, IGMGMATTFVLTVASLSAYLV, IPLEAQFLRTLVFILVIAVIV, LLGIYLPLITTNCAVLGVALL, VLYGFGAALGFSLVLVLFAAL, and SIALITAGLMSLAFMGFTGLV.

The protein belongs to the NqrDE/RnfAE family. The complex is composed of six subunits: RnfA, RnfB, RnfC, RnfD, RnfE and RnfG.

It localises to the cell inner membrane. Its function is as follows. Part of a membrane-bound complex that couples electron transfer with translocation of ions across the membrane. This Actinobacillus pleuropneumoniae serotype 5b (strain L20) protein is Ion-translocating oxidoreductase complex subunit A.